Here is a 490-residue protein sequence, read N- to C-terminus: Sec sixty-one protein homolog (490 aa).

Over methionine 1–lysine 32 the chain is Cytoplasmic. The chain crosses the membrane as a helical span at residues isoleucine 33–leucine 53. Residues proline 54–lysine 121 lie on the Lumenal side of the membrane. The helical transmembrane segment at valine 122 to glycine 142 threads the bilayer. The Cytoplasmic portion of the chain corresponds to aspartate 143–serine 146. A helical transmembrane segment spans residues valine 147–leucine 167. The Lumenal portion of the chain corresponds to alanine 168 to glycine 174. Residues phenylalanine 175–alanine 195 traverse the membrane as a helical segment. The Cytoplasmic segment spans residues aspartate 196 to aspartate 242. Residues tyrosine 243–leucine 263 form a helical membrane-spanning segment. Topologically, residues glutamine 264–cysteine 293 are lumenal. A helical transmembrane segment spans residues leucine 294 to isoleucine 314. The Cytoplasmic segment spans residues glutamine 315–leucine 339. The chain crosses the membrane as a helical span at residues leucine 340–valine 360. A topological domain (lumenal) is located at residue threonine 361. The chain crosses the membrane as a helical span at residues glutamine 362–alanine 382. The Cytoplasmic segment spans residues aspartate 383–lysine 421. The chain crosses the membrane as a helical span at residues valine 422–glutamate 442. Topologically, residues serine 443–lysine 449 are lumenal. The chain crosses the membrane as a helical span at residues alanine 450 to glutamate 470. Residues tyrosine 471–methionine 490 lie on the Cytoplasmic side of the membrane.

It belongs to the SecY/SEC61-alpha family. In terms of assembly, component of the heterotrimeric Ssh1 complex, which is composed of SSH1, SBH2 and SSS1.

It localises to the endoplasmic reticulum membrane. Its function is as follows. Part of the Ssh1 complex, which probably is the major component of a channel-forming translocon complex that may function exclusively in the cotranslational pathway of protein endoplasmic reticulum (ER) import. This is Sec sixty-one protein homolog (SSH1) from Saccharomyces cerevisiae (strain ATCC 204508 / S288c) (Baker's yeast).